A 121-amino-acid polypeptide reads, in one-letter code: Histone H2B, sperm (121 aa).

The segment at 1-30 (MPPKSGKGQKKAGKAKGAPRSDKKRRRKRK) is disordered. Pro2 carries the n,N-dimethylproline modification. A glycan (O-linked (GlcNAc) serine) is linked at Ser108. Lys116 is covalently cross-linked (Glycyl lysine isopeptide (Lys-Gly) (interchain with G-Cter in ubiquitin)).

Belongs to the histone H2B family. As to quaternary structure, the nucleosome is a histone octamer containing two molecules each of H2A, H2B, H3 and H4 assembled in one H3-H4 heterotetramer and two H2A-H2B heterodimers. The octamer wraps approximately 147 bp of DNA. In terms of processing, monoubiquitination of Lys-116 gives a specific tag for epigenetic transcriptional activation and is also prerequisite for histone H3 'Lys-4' and 'Lys-79' methylation. Post-translationally, glcNAcylation at Ser-108 promotes monoubiquitination of Lys-116. It fluctuates in response to extracellular glucose, and associates with transcribed genes.

Its subcellular location is the nucleus. The protein resides in the chromosome. Functionally, core component of nucleosome. Nucleosomes wrap and compact DNA into chromatin, limiting DNA accessibility to the cellular machineries which require DNA as a template. Histones thereby play a central role in transcription regulation, DNA repair, DNA replication and chromosomal stability. DNA accessibility is regulated via a complex set of post-translational modifications of histones, also called histone code, and nucleosome remodeling. This is Histone H2B, sperm from Marthasterias glacialis (Spiny starfish).